Consider the following 240-residue polypeptide: NADH-quinone oxidoreductase subunit I 2 (240 aa).

2 consecutive 4Fe-4S ferredoxin-type domains span residues 57–86 (TDLR…IEWH) and 97–126 (DRFA…MGYD). C66, C69, C72, C76, C106, C109, C112, and C116 together coordinate [4Fe-4S] cluster. The interval 185–240 (IHGYLGRPPLPKGYEPELKPQFRKPAEEAAEAQQAEAAGQPAAEPGKTNGEEAGQP) is disordered. Basic and acidic residues predominate over residues 198-211 (YEPELKPQFRKPAE). Positions 215–230 (EAQQAEAAGQPAAEPG) are enriched in low complexity.

This sequence belongs to the complex I 23 kDa subunit family. NDH-1 is composed of 14 different subunits. Subunits NuoA, H, J, K, L, M, N constitute the membrane sector of the complex. It depends on [4Fe-4S] cluster as a cofactor.

It is found in the cell membrane. It carries out the reaction a quinone + NADH + 5 H(+)(in) = a quinol + NAD(+) + 4 H(+)(out). Functionally, NDH-1 shuttles electrons from NADH, via FMN and iron-sulfur (Fe-S) centers, to quinones in the respiratory chain. The immediate electron acceptor for the enzyme in this species is believed to be ubiquinone. Couples the redox reaction to proton translocation (for every two electrons transferred, four hydrogen ions are translocated across the cytoplasmic membrane), and thus conserves the redox energy in a proton gradient. This chain is NADH-quinone oxidoreductase subunit I 2, found in Symbiobacterium thermophilum (strain DSM 24528 / JCM 14929 / IAM 14863 / T).